The following is a 150-amino-acid chain: Transcriptional repressor NrdR (150 aa).

Residues 3-34 (CPFCNFSDSKVVDSRPDKGGAAIRRRRECESC) fold into a zinc finger. Residues 49–139 (PLVTKRDGRR…VYRSFKDINE (91 aa)) form the ATP-cone domain.

Belongs to the NrdR family. It depends on Zn(2+) as a cofactor.

Negatively regulates transcription of bacterial ribonucleotide reductase nrd genes and operons by binding to NrdR-boxes. The sequence is that of Transcriptional repressor NrdR from Citrifermentans bemidjiense (strain ATCC BAA-1014 / DSM 16622 / JCM 12645 / Bem) (Geobacter bemidjiensis).